The primary structure comprises 177 residues: Thymidine kinase (177 aa).

11-18 (GPMFSGKS) contacts ATP. Glu-83 (proton acceptor) is an active-site residue. A substrate-binding site is contributed by Phe-113. The Zn(2+) site is built by Cys-138 and Cys-141. Residue 157–161 (IEIIG) participates in substrate binding. Residues Cys-170 and Cys-173 each contribute to the Zn(2+) site.

The protein belongs to the thymidine kinase family. In terms of assembly, homotetramer. Two molecules of substrate bind to each enzyme tetramer.

The enzyme catalyses thymidine + ATP = dTMP + ADP + H(+). Its function is as follows. Phosphorylates thymidine and thymidine analogs, such as azidothymidine (AZT). Part of the salvage pathway for pyrimidine deoxyribonucleotide synthesis. This is Thymidine kinase (OPG101) from Vaccinia virus (strain Copenhagen) (VACV).